Consider the following 510-residue polypeptide: ATP synthase subunit alpha (510 aa).

169 to 176 provides a ligand contact to ATP; that stretch reads GDRQTGKT.

Belongs to the ATPase alpha/beta chains family. F-type ATPases have 2 components, CF(1) - the catalytic core - and CF(0) - the membrane proton channel. CF(1) has five subunits: alpha(3), beta(3), gamma(1), delta(1), epsilon(1). CF(0) has three main subunits: a(1), b(2) and c(9-12). The alpha and beta chains form an alternating ring which encloses part of the gamma chain. CF(1) is attached to CF(0) by a central stalk formed by the gamma and epsilon chains, while a peripheral stalk is formed by the delta and b chains.

Its subcellular location is the cell inner membrane. The enzyme catalyses ATP + H2O + 4 H(+)(in) = ADP + phosphate + 5 H(+)(out). Produces ATP from ADP in the presence of a proton gradient across the membrane. The alpha chain is a regulatory subunit. The chain is ATP synthase subunit alpha from Azorhizobium caulinodans (strain ATCC 43989 / DSM 5975 / JCM 20966 / LMG 6465 / NBRC 14845 / NCIMB 13405 / ORS 571).